The sequence spans 144 residues: Large ribosomal subunit protein uL13 (144 aa).

This sequence belongs to the universal ribosomal protein uL13 family. In terms of assembly, part of the 50S ribosomal subunit.

This protein is one of the early assembly proteins of the 50S ribosomal subunit, although it is not seen to bind rRNA by itself. It is important during the early stages of 50S assembly. In Mycoplasmopsis agalactiae (strain NCTC 10123 / CIP 59.7 / PG2) (Mycoplasma agalactiae), this protein is Large ribosomal subunit protein uL13.